A 455-amino-acid polypeptide reads, in one-letter code: Growth/differentiation factor 9 (455 aa).

The N-terminal stretch at 1 to 24 (MALPNKFLLWFYCFAWLCFPVSLG) is a signal peptide. The propeptide occupies 25-320 (SQASGGDAQI…GRSSHHRHRR (296 aa)). Asparagine 106, asparagine 163, asparagine 236, asparagine 255, and asparagine 269 each carry an N-linked (GlcNAc...) asparagine glycan. The disordered stretch occupies residues 305–328 (EDAAEDGRSSHHRHRRGQETVSSE). An N-linked (GlcNAc...) asparagine glycan is attached at asparagine 339. 3 disulfides stabilise this stretch: cysteine 354/cysteine 420, cysteine 383/cysteine 452, and cysteine 387/cysteine 454.

Belongs to the TGF-beta family. In terms of assembly, homodimer or heterodimer (Potential). But, in contrast to other members of this family, cannot be disulfide-linked. Post-translationally, phosphorylated; phosphorylation is critical for GDF9 function.

Its subcellular location is the secreted. Functionally, required for ovarian folliculogenesis. The polypeptide is Growth/differentiation factor 9 (GDF9) (Papio anubis (Olive baboon)).